Consider the following 285-residue polypeptide: V-set and transmembrane domain-containing protein 2B (285 aa).

The first 28 residues, 1–28 (MEQRNRLGALGYLPPLLLHALLLFVADA), serve as a signal peptide directing secretion. One can recognise an Ig-like V-type domain in the interval 29–143 (AFTEVPKDVT…DDDTQEHKAQ (115 aa)). The Extracellular segment spans residues 29–263 (AFTEVPKDVT…HGSGTGRSYT (235 aa)). Cys49 and Cys127 are joined by a disulfide. The interval 161–226 (EAVSHIQSSG…EAAAASAAHT (66 aa)) is disordered. Composition is skewed to low complexity over residues 177–189 (ASAA…GAAS) and 208–226 (PAAI…AAHT). A helical membrane pass occupies residues 264–284 (TDPLLSLLLLALHKFLRLLLG). Residue His285 is a topological domain, cytoplasmic.

It is found in the membrane. The protein is V-set and transmembrane domain-containing protein 2B (VSTM2B) of Homo sapiens (Human).